Consider the following 100-residue polypeptide: Small ribosomal subunit protein uS14 (100 aa).

Belongs to the universal ribosomal protein uS14 family. Part of the 30S ribosomal subunit. Contacts proteins S3 and S10.

Its function is as follows. Binds 16S rRNA, required for the assembly of 30S particles and may also be responsible for determining the conformation of the 16S rRNA at the A site. This is Small ribosomal subunit protein uS14 from Prochlorococcus marinus (strain MIT 9215).